Consider the following 274-residue polypeptide: Undecaprenyl-diphosphatase (274 aa).

7 helical membrane passes run 4-24 (ILLL…FLPI), 46-63 (LFEI…VWEY), 82-102 (KFIL…LAFG), 109-129 (LFNP…ILWA), 184-204 (ATEF…FYQL), 218-238 (MWAV…RWLL), and 249-269 (FAWY…FGWV).

Belongs to the UppP family.

It localises to the cell inner membrane. It catalyses the reaction di-trans,octa-cis-undecaprenyl diphosphate + H2O = di-trans,octa-cis-undecaprenyl phosphate + phosphate + H(+). Its function is as follows. Catalyzes the dephosphorylation of undecaprenyl diphosphate (UPP). Confers resistance to bacitracin. The chain is Undecaprenyl-diphosphatase from Dechloromonas aromatica (strain RCB).